We begin with the raw amino-acid sequence, 238 residues long: Pyridoxine 5'-phosphate synthase (238 aa).

Asn-6 is a 3-amino-2-oxopropyl phosphate binding site. A 1-deoxy-D-xylulose 5-phosphate-binding site is contributed by 8-9; it reads DH. Arg-17 serves as a coordination point for 3-amino-2-oxopropyl phosphate. The Proton acceptor role is filled by His-42. 1-deoxy-D-xylulose 5-phosphate-binding residues include Arg-44 and His-49. The active-site Proton acceptor is the Glu-69. Thr-99 is a 1-deoxy-D-xylulose 5-phosphate binding site. The active-site Proton donor is the His-186. 3-amino-2-oxopropyl phosphate is bound by residues Gly-187 and 208 to 209; that span reads GH.

Belongs to the PNP synthase family. As to quaternary structure, homooctamer; tetramer of dimers.

The protein localises to the cytoplasm. The enzyme catalyses 3-amino-2-oxopropyl phosphate + 1-deoxy-D-xylulose 5-phosphate = pyridoxine 5'-phosphate + phosphate + 2 H2O + H(+). It participates in cofactor biosynthesis; pyridoxine 5'-phosphate biosynthesis; pyridoxine 5'-phosphate from D-erythrose 4-phosphate: step 5/5. In terms of biological role, catalyzes the complicated ring closure reaction between the two acyclic compounds 1-deoxy-D-xylulose-5-phosphate (DXP) and 3-amino-2-oxopropyl phosphate (1-amino-acetone-3-phosphate or AAP) to form pyridoxine 5'-phosphate (PNP) and inorganic phosphate. This Anaplasma marginale (strain St. Maries) protein is Pyridoxine 5'-phosphate synthase.